A 582-amino-acid polypeptide reads, in one-letter code: uncharacterized protein (582 aa).

Positions 1 to 23 (MAHEGSRQVRDRGVTRSKAEKVR) are enriched in basic and acidic residues. 3 disordered regions span residues 1–29 (MAHE…TVPV), 110–133 (AVAE…SWAQ), and 147–221 (LENF…SSAG). Residue serine 242 is modified to Phosphoserine. Disordered stretches follow at residues 310 to 331 (RPSA…SAHH) and 551 to 582 (LSSG…PKPR). A compositionally biased stretch (polar residues) spans 311–320 (PSASCQQQRA).

This is an uncharacterized protein from Homo sapiens (Human).